We begin with the raw amino-acid sequence, 292 residues long: Transmembrane and ubiquitin-like domain-containing protein 1 (292 aa).

Residues 11 to 31 (VTLLFGVVFLVLVLVLAWAST) traverse the membrane as a helical segment. Residues 34-143 (VEPPEHLLSP…TQPSAEDAAS (110 aa)) are disordered. The segment covering 71-80 (VRDEDDKSEP) has biased composition (basic and acidic residues). Over residues 84 to 94 (AGAAGQSADGS) the composition is skewed to low complexity. Positions 149–222 (MVLRLKFLND…LHCHISQHAT (74 aa)) constitute a Ubiquitin-like domain. The next 2 membrane-spanning stretches (helical) occupy residues 237–257 (VALN…SVLW) and 269–289 (APAT…AFGV).

It localises to the membrane. It is found in the cytoplasm. The protein resides in the nucleus. Functionally, may contribute to the regulation of translation during cell-cycle progression. May contribute to the regulation of cell proliferation. The membrane form is involved in sterol-regulated ubiquitination and degradation of HMG-CoA reductase HMGCR. May be involved in centrosome assembly. This chain is Transmembrane and ubiquitin-like domain-containing protein 1 (tmub1), found in Danio rerio (Zebrafish).